The sequence spans 344 residues: Transcription factor AIG1 (344 aa).

The 50-residue stretch at 131–180 (AASKSHSEAERRRRERINTHLAKLRSILPNTTKTDKASLLAEVIQHMKEL) folds into the bHLH domain. Positions 313 to 344 (NDESNDNNNLEKSSSGGIKRQRTSKMVNRCYN) are disordered. The span at 318-327 (DNNNLEKSSS) shows a compositional bias: low complexity.

As to quaternary structure, homodimer. Interacts with LHW.

Its subcellular location is the nucleus. Transcription factor required for MONOPTEROS-dependent root initiation in embryo. Transcriptionally controlled by MONOPTEROS. The chain is Transcription factor AIG1 (BHLH32) from Arabidopsis thaliana (Mouse-ear cress).